The sequence spans 144 residues: Large ribosomal subunit protein uL11 (144 aa).

Belongs to the universal ribosomal protein uL11 family. Part of the ribosomal stalk of the 50S ribosomal subunit. Interacts with L10 and the large rRNA to form the base of the stalk. L10 forms an elongated spine to which L12 dimers bind in a sequential fashion forming a multimeric L10(L12)X complex. Post-translationally, one or more lysine residues are methylated.

In terms of biological role, forms part of the ribosomal stalk which helps the ribosome interact with GTP-bound translation factors. The polypeptide is Large ribosomal subunit protein uL11 (Corynebacterium glutamicum (strain R)).